The primary structure comprises 572 residues: Oxygen-dependent choline dehydrogenase (572 aa).

Residue Asp9–Glu38 participates in FAD binding. The active-site Proton acceptor is His477.

The protein belongs to the GMC oxidoreductase family. Requires FAD as cofactor.

It carries out the reaction choline + A = betaine aldehyde + AH2. It catalyses the reaction betaine aldehyde + NAD(+) + H2O = glycine betaine + NADH + 2 H(+). Its pathway is amine and polyamine biosynthesis; betaine biosynthesis via choline pathway; betaine aldehyde from choline (cytochrome c reductase route): step 1/1. Involved in the biosynthesis of the osmoprotectant glycine betaine. Catalyzes the oxidation of choline to betaine aldehyde and betaine aldehyde to glycine betaine at the same rate. The sequence is that of Oxygen-dependent choline dehydrogenase from Staphylococcus epidermidis (strain ATCC 12228 / FDA PCI 1200).